The sequence spans 441 residues: Putative collagenous domain-containing protein R238 (441 aa).

Residues glycine 164 to proline 199 form the Collagen-like domain. Residues isoleucine 171–glutamate 198 form a disordered region. The segment covering isoleucine 187–glutamate 198 has biased composition (basic and acidic residues).

The chain is Putative collagenous domain-containing protein R238 from Acanthamoeba polyphaga (Amoeba).